Reading from the N-terminus, the 207-residue chain is MAKYVGPKLKLSRRENTDLFLKSGIRSIDSKCQFDHAPGQHSIRKSRLSDYGVQLREKQKVKRMYGILENQFANYYRKSASMKGNTGEILLQLLESRLDNVVYRMGFGSTRAESRQLVSHKSIIVNDCIVNIASYQVVPNTVIQVYKKSHNQSRIYAALEIAEQQRESVPWIEVDSAKLKGIFKRRPERSELSANINEHLIVELYSK.

Residues 96–156 (SRLDNVVYRM…KKSHNQSRIY (61 aa)) form the S4 RNA-binding domain.

Belongs to the universal ribosomal protein uS4 family. Part of the 30S ribosomal subunit. Contacts protein S5. The interaction surface between S4 and S5 is involved in control of translational fidelity.

Functionally, one of the primary rRNA binding proteins, it binds directly to 16S rRNA where it nucleates assembly of the body of the 30S subunit. With S5 and S12 plays an important role in translational accuracy. The chain is Small ribosomal subunit protein uS4 from Blochmanniella floridana.